The following is a 261-amino-acid chain: Homeobox-leucine zipper protein HOX24 (261 aa).

Disordered stretches follow at residues 42–67 (AAAA…RKRR) and 160–188 (KLNE…NSVM). Residues 46–61 (GRGGGDGDGGGGGGGG) are compositionally biased toward gly residues. The segment at residues 61–121 (GGERKRRFTE…NKRARWRSKQ (61 aa)) is a DNA-binding region (homeobox). The interval 120-164 (KQIEHDYAALRAQYDALHARVESLRQEKLALADQVDELRGKLNER) is leucine-zipper.

The protein belongs to the HD-ZIP homeobox family. Class I subfamily. In terms of tissue distribution, expressed in roots and panicles.

The protein resides in the nucleus. Probable transcription factor. This chain is Homeobox-leucine zipper protein HOX24 (HOX24), found in Oryza sativa subsp. japonica (Rice).